Consider the following 263-residue polypeptide: Very long chain fatty acid elongase F (263 aa).

7 consecutive transmembrane segments (helical) span residues 10–30, 55–75, 98–118, 135–155, 159–179, 193–213, and 223–243; these read IPVF…LLFV, IFQI…LFVL, LICI…IFFV, FAMA…GVAF, LCLL…LSSI, ITIA…ITLA, and LTYG…QFYY.

It belongs to the ELO family. As to expression, no expression in adults.

It is found in the endoplasmic reticulum membrane. The catalysed reaction is a very-long-chain acyl-CoA + malonyl-CoA + H(+) = a very-long-chain 3-oxoacyl-CoA + CO2 + CoA. Functionally, condensing enzyme that elongates saturated and monounsaturated very long chain fatty acids, to yield products up to 30 carbons in length. The sequence is that of Very long chain fatty acid elongase F from Drosophila simulans (Fruit fly).